A 1807-amino-acid polypeptide reads, in one-letter code: Integrin beta-4 (1807 aa).

An N-terminal signal peptide occupies residues 1–27 (MAGLCSSPWVKLLLAVVLSAGLPGNMA). Residues 28–713 (NRCKKAQVKS…KKKDCLPAPS (686 aa)) lie on the Extracellular side of the membrane. The PSI domain maps to 29–73 (RCKKAQVKSCTECIRVDKSCAYCTDELFKERRCNTQADVLAAGCR). Cystine bridges form between cysteine 30-cysteine 48, cysteine 38-cysteine 456, cysteine 41-cysteine 61, cysteine 51-cysteine 72, cysteine 245-cysteine 288, cysteine 458-cysteine 477, cysteine 469-cysteine 480, and cysteine 482-cysteine 491. The region spanning 131–340 (DLYILMDFSN…SYYEKLHKYF (210 aa)) is the VWFA domain. Mg(2+)-binding residues include serine 139 and serine 141. Residues serine 141, aspartate 144, aspartate 145, and aspartate 176 each contribute to the Ca(2+) site. The tract at residues 194–199 (WPNSDP) is involved in NRG1- and IGF1-binding. Ca(2+) is bound by residues asparagine 228, aspartate 230, proline 232, and glutamate 233. Glutamate 233 contacts Mg(2+). Asparagine 327 carries an N-linked (GlcNAc...) asparagine glycan. Ca(2+) is bound at residue glutamate 350. I-EGF domains lie at 458–492 (CELQ…KTCN), 493–538 (CSTG…HFCE), 539–575 (YDNF…RSCD), and 576–617 (CPLS…TTCE). N-linked (GlcNAc...) asparagine glycosylation occurs at asparagine 492. Disulfide bonds link cysteine 493/cysteine 521, cysteine 504/cysteine 519, cysteine 513/cysteine 524, cysteine 526/cysteine 537, cysteine 544/cysteine 558, cysteine 552/cysteine 563, cysteine 565/cysteine 574, cysteine 576/cysteine 599, cysteine 583/cysteine 597, cysteine 591/cysteine 602, and cysteine 604/cysteine 616. Asparagine 580 carries N-linked (GlcNAc...) asparagine glycosylation. The N-linked (GlcNAc...) asparagine glycan is linked to asparagine 619. 4 cysteine pairs are disulfide-bonded: cysteine 628–cysteine 673, cysteine 634–cysteine 653, cysteine 637–cysteine 650, and cysteine 682–cysteine 708. Residue asparagine 697 is glycosylated (N-linked (GlcNAc...) asparagine). Residues 714–734 (WWLIPLLIFLLLLLVLLLLLC) form a helical membrane-spanning segment. The tract at residues 734–751 (CWKYCACCKACLGLLPCC) is palmitoylated on several cysteines. Over 735–1807 (WKYCACCKAC…THMDQQFFQT (1073 aa)) the chain is Cytoplasmic. Residues serine 773, serine 1071, and serine 1121 each carry the phosphoserine modification. A Calx-beta domain is found at 981 to 1086 (VNITIIKEQA…QVRRFQVQLS (106 aa)). Residues 1119–1141 (SASPPLPRGDLGAPQNPNAKAAG) are disordered. Fibronectin type-III domains follow at residues 1131-1220 (APQN…THQE) and 1224-1323 (EPGR…TQPK). 3 positions are modified to phosphoserine: serine 1386, serine 1389, and serine 1405. Phosphothreonine is present on threonine 1418. Serine 1425 carries the post-translational modification Phosphoserine. Position 1514 is a phosphothreonine (threonine 1514). 2 consecutive Fibronectin type-III domains span residues 1514–1609 (TPTR…VHPQ) and 1627–1723 (APGP…SQDG). Serine 1776 carries the phosphoserine modification.

This sequence belongs to the integrin beta chain family. As to quaternary structure, heterodimer of an alpha and a beta subunit. Beta-4 associates with alpha-6. Interacts (via cytoplasmic region) with COL17A1 (via cytoplasmic region). Interacts (via cytoplasmic region) with DST isoform 3 (via N-terminus). Interacts (via cytoplasmic domain) with DST (via N-terminus). Interacts with RAC1. ITGA6:ITGB4 is found in a ternary complex with NRG1 and ERBB3. ITGA6:ITGB4 is found in a ternary complex with IGF1 and IGF1R. ITGA6:ITGB4 interacts with IGF2. Interacts with TMEM268; this interaction prevents ITGB4 degradation. Palmitoylated by DHHC3 at several cysteines of the membrane-proximal region, enhancing stability and cell surface expression. Palmitoylation also promotes secondary association with tertaspanins.

It is found in the cell membrane. Its subcellular location is the cell junction. It localises to the hemidesmosome. Integrin alpha-6/beta-4 is a receptor for laminin. It plays a critical structural role in the hemidesmosome of epithelial cells. Is required for the regulation of keratinocyte polarity and motility. ITGA6:ITGB4 binds to NRG1 (via EGF domain) and this binding is essential for NRG1-ERBB signaling. ITGA6:ITGB4 binds to IGF1 and this binding is essential for IGF1 signaling. ITGA6:ITGB4 binds to IGF2 and this binding is essential for IGF2 signaling. The sequence is that of Integrin beta-4 (Itgb4) from Rattus norvegicus (Rat).